Consider the following 415-residue polypeptide: Multifunctional CCA protein (415 aa).

ATP-binding residues include G8 and R11. 2 residues coordinate CTP: G8 and R11. E21 and D23 together coordinate Mg(2+). Positions 91, 137, and 140 each coordinate ATP. Positions 91, 137, and 140 each coordinate CTP. An HD domain is found at 226–327 (TGIHTLMTVS…IKLFSAIDVW (102 aa)).

This sequence belongs to the tRNA nucleotidyltransferase/poly(A) polymerase family. Bacterial CCA-adding enzyme type 1 subfamily. In terms of assembly, monomer. Can also form homodimers and oligomers. Requires Mg(2+) as cofactor. Ni(2+) serves as cofactor.

It catalyses the reaction a tRNA precursor + 2 CTP + ATP = a tRNA with a 3' CCA end + 3 diphosphate. It carries out the reaction a tRNA with a 3' CCA end + 2 CTP + ATP = a tRNA with a 3' CCACCA end + 3 diphosphate. Functionally, catalyzes the addition and repair of the essential 3'-terminal CCA sequence in tRNAs without using a nucleic acid template. Adds these three nucleotides in the order of C, C, and A to the tRNA nucleotide-73, using CTP and ATP as substrates and producing inorganic pyrophosphate. tRNA 3'-terminal CCA addition is required both for tRNA processing and repair. Also involved in tRNA surveillance by mediating tandem CCA addition to generate a CCACCA at the 3' terminus of unstable tRNAs. While stable tRNAs receive only 3'-terminal CCA, unstable tRNAs are marked with CCACCA and rapidly degraded. This chain is Multifunctional CCA protein, found in Sodalis glossinidius (strain morsitans).